Here is a 402-residue protein sequence, read N- to C-terminus: Propionate kinase (402 aa).

Residues Asn11 and Lys18 each coordinate ATP. Asn11 serves as a coordination point for Mg(2+). Residue Arg86 coordinates substrate. Asp143 functions as the Proton donor/acceptor in the catalytic mechanism. ATP is bound by residues His175, 203–207 (HLGNG), 278–280 (DLR), and 326–330 (GIGEN).

This sequence belongs to the acetokinase family. TdcD subfamily. In terms of assembly, homodimer. Mg(2+) is required as a cofactor.

The enzyme catalyses propanoate + ATP = propanoyl phosphate + ADP. It functions in the pathway amino-acid degradation; L-threonine degradation via propanoate pathway; propanoate from L-threonine: step 4/4. Its function is as follows. Catalyzes the conversion of propionyl phosphate and ADP to propionate and ATP. The chain is Propionate kinase from Citrobacter koseri (strain ATCC BAA-895 / CDC 4225-83 / SGSC4696).